The following is a 179-amino-acid chain: Large ribosomal subunit protein uL5 (179 aa).

This sequence belongs to the universal ribosomal protein uL5 family. As to quaternary structure, part of the 50S ribosomal subunit; part of the 5S rRNA/L5/L18/L25 subcomplex. Contacts the 5S rRNA and the P site tRNA. Forms a bridge to the 30S subunit in the 70S ribosome.

This is one of the proteins that bind and probably mediate the attachment of the 5S RNA into the large ribosomal subunit, where it forms part of the central protuberance. In the 70S ribosome it contacts protein S13 of the 30S subunit (bridge B1b), connecting the 2 subunits; this bridge is implicated in subunit movement. Contacts the P site tRNA; the 5S rRNA and some of its associated proteins might help stabilize positioning of ribosome-bound tRNAs. This Buchnera aphidicola subsp. Cinara cedri (strain Cc) protein is Large ribosomal subunit protein uL5.